The chain runs to 203 residues: MTTEEKEILAAKLEEQKIDLDKPEVEDDDDNEDDDSDDDDKDDDEADGLDGEAGGKSKQSRSEKKSRKAMLKLGMKPITGVSRVTVKKSKNILFVISKPDVFKSPASDTYVIFGEAKIEDLSSQIQSQAAEQFKAPDLSNVISKGESSSAAVVQDDEEVDEEGVEPKDIELVMTQAGVSRPNAVKALKAADGDIVSAIMELTT.

Residues 1-23 are compositionally biased toward basic and acidic residues; it reads MTTEEKEILAAKLEEQKIDLDKP. The interval 1 to 71 is disordered; that stretch reads MTTEEKEILA…SEKKSRKAML (71 aa). The span at 24–50 shows a compositional bias: acidic residues; the sequence is EVEDDDDNEDDDSDDDDKDDDEADGLD. Serine 36 carries the phosphoserine modification. Positions 60–125 constitute an NAC-A/B domain; it reads SRSEKKSRKA…AKIEDLSSQI (66 aa). Positions 158–203 constitute a UBA domain; that stretch reads EVDEEGVEPKDIELVMTQAGVSRPNAVKALKAADGDIVSAIMELTT.

The protein belongs to the NAC-alpha family.

In terms of biological role, may promote appropriate targeting of ribosome-nascent polypeptide complexes. This chain is Nascent polypeptide-associated complex subunit alpha-like protein 1, found in Arabidopsis thaliana (Mouse-ear cress).